We begin with the raw amino-acid sequence, 199 residues long: N-(5'-phosphoribosyl)anthranilate isomerase (199 aa).

Belongs to the TrpF family.

The catalysed reaction is N-(5-phospho-beta-D-ribosyl)anthranilate = 1-(2-carboxyphenylamino)-1-deoxy-D-ribulose 5-phosphate. It functions in the pathway amino-acid biosynthesis; L-tryptophan biosynthesis; L-tryptophan from chorismate: step 3/5. The protein is N-(5'-phosphoribosyl)anthranilate isomerase of Clostridium kluyveri (strain NBRC 12016).